The following is a 492-amino-acid chain: Aspartyl/glutamyl-tRNA(Asn/Gln) amidotransferase subunit B (492 aa).

The protein belongs to the GatB/GatE family. GatB subfamily. In terms of assembly, heterotrimer of A, B and C subunits.

It catalyses the reaction L-glutamyl-tRNA(Gln) + L-glutamine + ATP + H2O = L-glutaminyl-tRNA(Gln) + L-glutamate + ADP + phosphate + H(+). It carries out the reaction L-aspartyl-tRNA(Asn) + L-glutamine + ATP + H2O = L-asparaginyl-tRNA(Asn) + L-glutamate + ADP + phosphate + 2 H(+). In terms of biological role, allows the formation of correctly charged Asn-tRNA(Asn) or Gln-tRNA(Gln) through the transamidation of misacylated Asp-tRNA(Asn) or Glu-tRNA(Gln) in organisms which lack either or both of asparaginyl-tRNA or glutaminyl-tRNA synthetases. The reaction takes place in the presence of glutamine and ATP through an activated phospho-Asp-tRNA(Asn) or phospho-Glu-tRNA(Gln). The polypeptide is Aspartyl/glutamyl-tRNA(Asn/Gln) amidotransferase subunit B (Azorhizobium caulinodans (strain ATCC 43989 / DSM 5975 / JCM 20966 / LMG 6465 / NBRC 14845 / NCIMB 13405 / ORS 571)).